Reading from the N-terminus, the 590-residue chain is Fucose-1-phosphate guanylyltransferase (590 aa).

In terms of tissue distribution, expressed at highest levels in brain, moderately in testis, ovary and kidney, and weakly in liver, spleen, heart and lung.

Its subcellular location is the cytoplasm. It catalyses the reaction beta-L-fucose 1-phosphate + GTP + H(+) = GDP-beta-L-fucose + diphosphate. Catalyzes the formation of GDP-L-fucose from GTP and L-fucose-1-phosphate. Functions as a salvage pathway to reutilize L-fucose arising from the turnover of glycoproteins and glycolipids. The sequence is that of Fucose-1-phosphate guanylyltransferase from Mus musculus (Mouse).